Consider the following 72-residue polypeptide: PI-stichotoxin-Hmg3d (72 aa).

A signal peptide spans 1–14 (GFYFRSIQGFYFKR). The BPTI/Kunitz inhibitor domain maps to 20 to 70 (CSEPKKVGRCRGSFPRFYFDSETGKCTPFIYGGCGGNGNNFETLRRCRAIC). 3 disulfide bridges follow: cysteine 20–cysteine 70, cysteine 29–cysteine 53, and cysteine 45–cysteine 66.

Belongs to the venom Kunitz-type family. Sea anemone type 2 potassium channel toxin subfamily.

It is found in the secreted. It localises to the nematocyst. Its function is as follows. Serine protease inhibitor that inhibits trypsin (Ki=50 nM). This protease exhibits a pronounced neuroprotective activity on Alzheimer's disease model. It enhances cell viability by 39.4% when neuroblastoma cells are in presence of the toxin component beta-amyloid, but has no effect when these cells are in presence of 6-OHDA. It induces an effective decrease of reactive oxygen species (ROS) level in the cells treated with oxidative stress inducers. It also protects these cells by inhibiting ATP-induced purinoceptor activation. Its binding affinity to P2RX7 is moderate (Kd=43.3 uM). This is PI-stichotoxin-Hmg3d from Heteractis magnifica (Magnificent sea anemone).